Here is a 347-residue protein sequence, read N- to C-terminus: Phenylalanine--tRNA ligase alpha subunit (347 aa).

A Mg(2+)-binding site is contributed by Glu-261.

Belongs to the class-II aminoacyl-tRNA synthetase family. Phe-tRNA synthetase alpha subunit type 1 subfamily. Tetramer of two alpha and two beta subunits. It depends on Mg(2+) as a cofactor.

It is found in the cytoplasm. The catalysed reaction is tRNA(Phe) + L-phenylalanine + ATP = L-phenylalanyl-tRNA(Phe) + AMP + diphosphate + H(+). In Streptococcus pyogenes serotype M18 (strain MGAS8232), this protein is Phenylalanine--tRNA ligase alpha subunit.